Reading from the N-terminus, the 273-residue chain is Undecaprenyl-diphosphatase (273 aa).

A run of 8 helical transmembrane segments spans residues 3–23, 48–68, 89–109, 116–136, 151–171, 192–212, 225–245, and 253–273; these read IIELIKALILGLVEGATEFAP, GANTFKVVIQLGSVLAAVVVF, LTLMHIFVGLLPAGVLGVLFE, LFSTKTVLIGLVLGALLMIAA, ITYKQAFIVGLVQCLSLWPGF, ADFTFIMAVPIMAGASAISLL, FFVVGFISAFVFALLAIRFFL, and LVPFAIYRIVLAAVIYVVYFA.

This sequence belongs to the UppP family.

The protein localises to the cell membrane. The catalysed reaction is di-trans,octa-cis-undecaprenyl diphosphate + H2O = di-trans,octa-cis-undecaprenyl phosphate + phosphate + H(+). Catalyzes the dephosphorylation of undecaprenyl diphosphate (UPP). Confers resistance to bacitracin. The sequence is that of Undecaprenyl-diphosphatase from Anoxybacillus flavithermus (strain DSM 21510 / WK1).